Reading from the N-terminus, the 131-residue chain is Small ribosomal subunit protein uS11 (131 aa).

The protein belongs to the universal ribosomal protein uS11 family. In terms of assembly, part of the 30S ribosomal subunit. Interacts with proteins S7 and S18. Binds to IF-3.

Functionally, located on the platform of the 30S subunit, it bridges several disparate RNA helices of the 16S rRNA. Forms part of the Shine-Dalgarno cleft in the 70S ribosome. In Paramagnetospirillum magneticum (strain ATCC 700264 / AMB-1) (Magnetospirillum magneticum), this protein is Small ribosomal subunit protein uS11.